Consider the following 457-residue polypeptide: Acetylcholine receptor subunit alpha-1-A (457 aa).

A signal peptide spans 1–20 (MDFVLTRLILLFLAATIIYS). The Extracellular segment spans residues 21-230 (SEDESRLIND…ITYHFLLQRL (210 aa)). 2 cysteine pairs are disulfide-bonded: Cys-148–Cys-162 and Cys-212–Cys-213. The N-linked (GlcNAc...) asparagine glycan is linked to Asn-161. Transmembrane regions (helical) follow at residues 231-255 (PLYFIVNVVIPCLLFSFLTGLVFYL), 263-281 (ITLSVSVLLSLVVFLLVIV), and 297-316 (YMLFTMVFVIASIVITVIVI). The Cytoplasmic portion of the chain corresponds to 317-428 (NTHHRSPSTH…WKFVAMVLDH (112 aa)). The chain crosses the membrane as a helical span at residues 429–447 (LLLAVFMIVCIIGTLAIFA).

Belongs to the ligand-gated ion channel (TC 1.A.9) family. Acetylcholine receptor (TC 1.A.9.1) subfamily. Alpha-1/CHRNA1 sub-subfamily. In terms of assembly, one of the alpha chains that assemble within the acetylcholine receptor, a pentamer of two alpha chains, a beta, a delta, and a gamma or epsilon chains. Oocytes.

The protein resides in the postsynaptic cell membrane. It is found in the cell membrane. It catalyses the reaction K(+)(in) = K(+)(out). It carries out the reaction Na(+)(in) = Na(+)(out). Its function is as follows. Upon acetylcholine binding, the AChR responds by an extensive change in conformation that affects all subunits and leads to opening of an ion-conducting channel across the plasma membrane. The chain is Acetylcholine receptor subunit alpha-1-A (chrna1-a) from Xenopus laevis (African clawed frog).